The chain runs to 493 residues: 3-octaprenyl-4-hydroxybenzoate carboxy-lyase (493 aa).

Mn(2+) is bound at residue Asn172. Prenylated FMN contacts are provided by residues 175–177 (IYR), 189–191 (RWL), and 194–195 (RG). Glu238 is a binding site for Mn(2+). Residue Asp287 is the Proton donor of the active site.

Belongs to the UbiD family. Homohexamer. Prenylated FMN serves as cofactor. Requires Mn(2+) as cofactor.

It localises to the cell membrane. It carries out the reaction a 4-hydroxy-3-(all-trans-polyprenyl)benzoate + H(+) = a 2-(all-trans-polyprenyl)phenol + CO2. The protein operates within cofactor biosynthesis; ubiquinone biosynthesis. In terms of biological role, catalyzes the decarboxylation of 3-octaprenyl-4-hydroxy benzoate to 2-octaprenylphenol, an intermediate step in ubiquinone biosynthesis. This chain is 3-octaprenyl-4-hydroxybenzoate carboxy-lyase, found in Shewanella sp. (strain MR-4).